Consider the following 274-residue polypeptide: Large ribosomal subunit protein uL2 (274 aa).

Disordered stretches follow at residues 21 to 59 (KVGL…GGHK) and 223 to 274 (VAMN…QLKG). The segment covering 32-42 (SLTSGKKSSGG) has biased composition (low complexity). The span at 45–59 (NHGRITTRHRGGGHK) shows a compositional bias: basic residues. The span at 263–274 (KSSDKYIKQLKG) shows a compositional bias: basic and acidic residues.

Belongs to the universal ribosomal protein uL2 family. As to quaternary structure, part of the 50S ribosomal subunit. Forms a bridge to the 30S subunit in the 70S ribosome.

In terms of biological role, one of the primary rRNA binding proteins. Required for association of the 30S and 50S subunits to form the 70S ribosome, for tRNA binding and peptide bond formation. It has been suggested to have peptidyltransferase activity; this is somewhat controversial. Makes several contacts with the 16S rRNA in the 70S ribosome. This is Large ribosomal subunit protein uL2 from Wolbachia sp. subsp. Drosophila simulans (strain wRi).